Reading from the N-terminus, the 349-residue chain is Signal peptidase I (349 aa).

Helical transmembrane passes span 3-23 (NLFF…LDYF) and 25-45 (LPNT…VLWC). Residues 46–80 (YHRFVVLPKRHRQVARAEQRSGKTLSEEEKAKIEP) lie on the Cytoplasmic side of the membrane. The chain crosses the membrane as a helical span at residues 81 to 101 (ISEASEFLSSLFPVLAVVFLV). Residues 102-349 (RSFLFEPFQI…RFERFFTAIK (248 aa)) lie on the Periplasmic side of the membrane. Active-site residues include Ser115 and Lys196.

The protein belongs to the peptidase S26 family.

Its subcellular location is the cell inner membrane. It carries out the reaction Cleavage of hydrophobic, N-terminal signal or leader sequences from secreted and periplasmic proteins.. The sequence is that of Signal peptidase I (lepB) from Haemophilus influenzae (strain ATCC 51907 / DSM 11121 / KW20 / Rd).